The primary structure comprises 145 residues: Large ribosomal subunit protein uL14m (145 aa).

Residues 1 to 30 constitute a mitochondrion transit peptide; it reads MAFFTGLWGPFTCVSRVLSHHCFSTTGSLS.

The protein belongs to the universal ribosomal protein uL14 family. Component of the mitochondrial large ribosomal subunit (mt-LSU). Mature mammalian 55S mitochondrial ribosomes consist of a small (28S) and a large (39S) subunit. The 28S small subunit contains a 12S ribosomal RNA (12S mt-rRNA) and 30 different proteins. The 39S large subunit contains a 16S rRNA (16S mt-rRNA), a copy of mitochondrial valine transfer RNA (mt-tRNA(Val)), which plays an integral structural role, and 52 different proteins. Interacts with MALSU1.

It is found in the mitochondrion. Functionally, forms part of 2 intersubunit bridges in the assembled ribosome. Upon binding to MALSU1 intersubunit bridge formation is blocked, preventing ribosome formation and repressing translation. In Homo sapiens (Human), this protein is Large ribosomal subunit protein uL14m (MRPL14).